A 393-amino-acid polypeptide reads, in one-letter code: Methylthioribose kinase (393 aa).

ATP contacts are provided by residues Asn-38, Lys-53, and 107 to 109; that span reads EDL. Asp-225 serves as a coordination point for substrate. 242-244 contacts ATP; it reads DPE. Arg-332 contacts substrate.

Belongs to the methylthioribose kinase family. Homodimer.

It carries out the reaction 5-(methylsulfanyl)-D-ribose + ATP = 5-(methylsulfanyl)-alpha-D-ribose 1-phosphate + ADP + H(+). Its pathway is amino-acid biosynthesis; L-methionine biosynthesis via salvage pathway; S-methyl-5-thio-alpha-D-ribose 1-phosphate from S-methyl-5'-thioadenosine (hydrolase route): step 2/2. Its function is as follows. Catalyzes the phosphorylation of methylthioribose into methylthioribose-1-phosphate. The polypeptide is Methylthioribose kinase (Bacillus cereus (strain 03BB102)).